A 218-amino-acid polypeptide reads, in one-letter code: Nucleoid occlusion factor SlmA (218 aa).

The HTH tetR-type domain occupies 30–90 (ERRQQVLTVL…ALIEHIESTL (61 aa)). Residues 53–72 (TTARLAKEVGVSEAALYRYF) constitute a DNA-binding region (H-T-H motif).

Belongs to the nucleoid occlusion factor SlmA family. In terms of assembly, homodimer. Interacts with FtsZ.

Its subcellular location is the cytoplasm. The protein resides in the nucleoid. Functionally, required for nucleoid occlusion (NO) phenomenon, which prevents Z-ring formation and cell division over the nucleoid. Acts as a DNA-associated cell division inhibitor that binds simultaneously chromosomal DNA and FtsZ, and disrupts the assembly of FtsZ polymers. SlmA-DNA-binding sequences (SBS) are dispersed on non-Ter regions of the chromosome, preventing FtsZ polymerization at these regions. The protein is Nucleoid occlusion factor SlmA of Haemophilus influenzae (strain PittGG).